The sequence spans 161 residues: Peroxynitrite isomerase 2 (161 aa).

The GXWXGXG motif lies at 17 to 23 (GTWTGRG). His-152 provides a ligand contact to heme b.

The protein belongs to the nitrobindin family. Homodimer. Heme b is required as a cofactor.

It carries out the reaction peroxynitrite = nitrate. The protein operates within nitrogen metabolism. Functionally, heme-binding protein able to scavenge peroxynitrite and to protect free L-tyrosine against peroxynitrite-mediated nitration, by acting as a peroxynitrite isomerase that converts peroxynitrite to nitrate. Therefore, this protein likely plays a role in peroxynitrite sensing and in the detoxification of reactive nitrogen and oxygen species (RNS and ROS, respectively). Is able to bind nitric oxide (NO) in vitro, but may act as a sensor of peroxynitrite levels in vivo. The sequence is that of Peroxynitrite isomerase 2 from Mycobacterium avium (strain 104).